A 474-amino-acid polypeptide reads, in one-letter code: uncharacterized protein (474 aa).

Residues 1–11 (MGGSDFEDDEL) are compositionally biased toward acidic residues. Residues 1 to 163 (MGGSDFEDDE…ETSPFNREDG (163 aa)) are disordered. Residues 12 to 25 (FKDLYGEENEKKVE) show a composition bias toward basic and acidic residues. The segment covering 27–39 (ASGNQETSNVTPT) has biased composition (polar residues). Over residues 40–76 (KENEGYEELEKSGEAGAERTKENPFREEPGADFDRSG) the composition is skewed to basic and acidic residues. Polar residues predominate over residues 129–140 (NDNYNENQSALT). RRM domains lie at 163–245 (GKMF…EQEK) and 247–324 (AKMF…RATP). The tract at residues 412 to 474 (DPSKMNQGTG…GGHSFHPYRR (63 aa)) is disordered. Low complexity predominate over residues 425 to 434 (PFSPSMPSGS). The span at 435–444 (SRGGYHGRNP) shows a compositional bias: gly residues.

The protein localises to the nucleus. This is an uncharacterized protein from Schizosaccharomyces pombe (strain 972 / ATCC 24843) (Fission yeast).